A 498-amino-acid polypeptide reads, in one-letter code: ATP synthase subunit beta, chloroplastic (498 aa).

172-179 lines the ATP pocket; the sequence is GGAGVGKT.

This sequence belongs to the ATPase alpha/beta chains family. As to quaternary structure, F-type ATPases have 2 components, CF(1) - the catalytic core - and CF(0) - the membrane proton channel. CF(1) has five subunits: alpha(3), beta(3), gamma(1), delta(1), epsilon(1). CF(0) has four main subunits: a(1), b(1), b'(1) and c(9-12).

The protein resides in the plastid. It is found in the chloroplast thylakoid membrane. It catalyses the reaction ATP + H2O + 4 H(+)(in) = ADP + phosphate + 5 H(+)(out). Functionally, produces ATP from ADP in the presence of a proton gradient across the membrane. The catalytic sites are hosted primarily by the beta subunits. In Solanum bulbocastanum (Wild potato), this protein is ATP synthase subunit beta, chloroplastic.